We begin with the raw amino-acid sequence, 155 residues long: Protein FAM163B (155 aa).

A helical membrane pass occupies residues 6-26; the sequence is VVITGGILATVILLCIIAVLC.

Belongs to the FAM163 family.

The protein localises to the membrane. This Xenopus tropicalis (Western clawed frog) protein is Protein FAM163B (fam163b).